Consider the following 587-residue polypeptide: Arginine--tRNA ligase (587 aa).

A 'HIGH' region motif is present at residues 127 to 137; that stretch reads ANPTGPLHVGH.

This sequence belongs to the class-I aminoacyl-tRNA synthetase family. Monomer.

The protein resides in the cytoplasm. It catalyses the reaction tRNA(Arg) + L-arginine + ATP = L-arginyl-tRNA(Arg) + AMP + diphosphate. In Dechloromonas aromatica (strain RCB), this protein is Arginine--tRNA ligase.